Reading from the N-terminus, the 4250-residue chain is Dynein axonemal heavy chain 1 (4250 aa).

The interval 1 to 73 (MEECNKEGPS…KSPLTGTDKK (73 aa)) is disordered. The tract at residues 1 to 1527 (MEECNKEGPS…YIRAVNAEFI (1527 aa)) is stem. A compositionally biased stretch (basic and acidic residues) spans 24–42 (PESHDLEKILQESNYHPER). Residues 46–55 (NPDPKTPPLP) show a composition bias toward pro residues. AAA stretches follow at residues 1528–1749 (YGYE…VISA), 1809–2042 (QAIR…NTVK), 2174–2434 (TMMP…VFQG), and 2532–2784 (DYNQ…LARH). A GPAGTGKT motif motif is present at residues 1566–1573 (GPAGTGKT). 1566-1573 (GPAGTGKT) contributes to the ATP binding site. Positions 1616-1622 (CFDEFNR) match the CFDEFNR motif motif. ATP is bound by residues 1847–1854 (GPTGSGKS), 2212–2219 (GPTGTGKT), and 2571–2578 (GVGGSGRS). Residues 2799 to 3097 (FSILIGQKKM…EELEMKCEQC (299 aa)) form a stalk region. Residues 3045 to 3128 (LREAQDDLEV…QETVENLENM (84 aa)) adopt a coiled-coil conformation. 2 AAA regions span residues 3182–3412 (LGNP…EIQA) and 3625–3844 (MQDF…QLKM).

Belongs to the dynein heavy chain family. As to quaternary structure, consists of at least two heavy chains and a number of intermediate and light chains.

It is found in the cytoplasm. The protein localises to the cytoskeleton. Its subcellular location is the cilium axoneme. The protein resides in the cell projection. It localises to the cilium. It is found in the flagellum. Functionally, force generating protein of cilia required for sperm flagellum motility. Produces force towards the minus ends of microtubules. Dynein has ATPase activity; the force-producing power stroke is thought to occur on release of ADP. Required in spermatozoa for the formation of the inner dynein arms and biogenesis of the axoneme. This Mus musculus (Mouse) protein is Dynein axonemal heavy chain 1.